A 347-amino-acid chain; its full sequence is Guanine nucleotide-binding protein alpha-6 subunit (347 aa).

Positions 30 to 347 constitute a G-alpha domain; it reads GITQVLLLGA…IIVGHVMDLV (318 aa). A G1 motif region spans residues 33–46; the sequence is QVLLLGAGESGKST. GTP contacts are provided by residues 38-45, 172-178, 197-201, 266-269, and Ala322; these read GAGESGKS, LRARVTT, DVGGQ, and NKKD. 2 residues coordinate Mg(2+): Ser45 and Thr178. Residues 170–178 are G2 motif; the sequence is DALRARVTT. Residues 193–202 form a G3 motif region; that stretch reads MKIIDVGGQR. The segment at 262 to 269 is G4 motif; that stretch reads ILFLNKKD. A G5 motif region spans residues 320-325; the sequence is TIAVDT.

It belongs to the G-alpha family. In terms of assembly, g proteins are composed of 3 units; alpha, beta and gamma. The alpha chain contains the guanine nucleotide binding site.

In terms of biological role, guanine nucleotide-binding proteins (G proteins) are involved as modulators or transducers in various transmembrane signaling systems. G alpha-6 is involved in the folic acid chemotaxis signal transduction pathway. This chain is Guanine nucleotide-binding protein alpha-6 subunit (gpaF), found in Dictyostelium discoideum (Social amoeba).